Reading from the N-terminus, the 428-residue chain is Cholecystokinin receptor type A (428 aa).

Topologically, residues 1 to 41 (MEVADSLLGNGSDVPPPCELGLENETLVCLEQPRAAKEWQP) are extracellular. Residues Asn-10 and Asn-24 are each glycosylated (N-linked (GlcNAc...) asparagine). The cysteines at positions 18 and 29 are disulfide-linked. Residues 42 to 67 (AVQILLYSLIFLLSVLGNTLVITVLI) form a helical membrane-spanning segment. The Cytoplasmic portion of the chain corresponds to 68–77 (RNKRMRTVTN). Residues 78–104 (IFLLSLAVSDLMLCLFCMPFNLIPNLL) traverse the membrane as a helical segment. Residues 105–115 (KDFIFGSAVCK) lie on the Extracellular side of the membrane. Cys-114 and Cys-196 are joined by a disulfide. The chain crosses the membrane as a helical span at residues 116-137 (TTTYFMGTSVSVSTFNLVAISL). Over 138–157 (ERYGAICKPLQSRVWQTKSH) the chain is Cytoplasmic. The helical transmembrane segment at 158–178 (ALKVIATTWCLSFTIMTPYPI) threads the bilayer. Residues 179 to 210 (YSNLVPFTKTNNQTANMCRFLLPNDVMQQSWH) are Extracellular-facing. Asn-190 is a glycosylation site (N-linked (GlcNAc...) asparagine). Residues 211–234 (TFLLLILFLIPGIVMMVAYGLISL) traverse the membrane as a helical segment. The Cytoplasmic portion of the chain corresponds to 235–313 (ELYQGIKFDA…NLMAKKRVIR (79 aa)). The disordered stretch occupies residues 250–269 (ARDRNPSTGSSGRYEDGDGC). The chain crosses the membrane as a helical span at residues 314–334 (MLMVIVVLFFLCWMPIFSANA). Over 335–349 (WRAYDTASAERRLSG) the chain is Extracellular. The helical transmembrane segment at 350 to 373 (TPISFILLLSYTSSCVNPIIYCFM) threads the bilayer. Residues 374–428 (NKRFRLGFLATFPCCPHPGPPGPRGEVGEEEEGRTTGASLSRYSYSHMSASAPGP) are Cytoplasmic-facing. Residue Cys-387 is the site of S-palmitoyl cysteine attachment. Positions 393–428 (PPGPRGEVGEEEEGRTTGASLSRYSYSHMSASAPGP) are disordered. A compositionally biased stretch (polar residues) spans 409–422 (TGASLSRYSYSHMS).

The protein belongs to the G-protein coupled receptor 1 family.

It is found in the cell membrane. Functionally, receptor for cholecystokinin. Mediates pancreatic growth and enzyme secretion, smooth muscle contraction of the gall bladder and stomach. Has a 1000-fold higher affinity for CCK rather than for gastrin. It modulates feeding and dopamine-induced behavior in the central and peripheral nervous system. This receptor mediates its action by association with G proteins that activate a phosphatidylinositol-calcium second messenger system. This chain is Cholecystokinin receptor type A (CCKAR), found in Canis lupus familiaris (Dog).